An 803-amino-acid polypeptide reads, in one-letter code: Leucine--tRNA ligase (803 aa).

The 'HIGH' region signature appears at 40 to 51 (PYPSGQGLHVGH). A 'KMSKS' region motif is present at residues 575-579 (KMSKS). Residue Lys-578 coordinates ATP.

Belongs to the class-I aminoacyl-tRNA synthetase family.

The protein localises to the cytoplasm. It catalyses the reaction tRNA(Leu) + L-leucine + ATP = L-leucyl-tRNA(Leu) + AMP + diphosphate. The protein is Leucine--tRNA ligase of Lacticaseibacillus paracasei (strain ATCC 334 / BCRC 17002 / CCUG 31169 / CIP 107868 / KCTC 3260 / NRRL B-441) (Lactobacillus paracasei).